The primary structure comprises 514 residues: 2,3-bisphosphoglycerate-independent phosphoglycerate mutase (514 aa).

2 residues coordinate Mn(2+): aspartate 13 and serine 63. The Phosphoserine intermediate role is filled by serine 63. Substrate contacts are provided by residues histidine 124, 154–155, arginine 186, arginine 192, 258–261, and lysine 332; these read RD and RADR. Positions 399, 403, 440, 441, and 459 each coordinate Mn(2+).

This sequence belongs to the BPG-independent phosphoglycerate mutase family. As to quaternary structure, monomer. The cofactor is Mn(2+).

The enzyme catalyses (2R)-2-phosphoglycerate = (2R)-3-phosphoglycerate. The protein operates within carbohydrate degradation; glycolysis; pyruvate from D-glyceraldehyde 3-phosphate: step 3/5. Catalyzes the interconversion of 2-phosphoglycerate and 3-phosphoglycerate. The chain is 2,3-bisphosphoglycerate-independent phosphoglycerate mutase from Legionella pneumophila (strain Lens).